The sequence spans 208 residues: ATP phosphoribosyltransferase (208 aa).

It belongs to the ATP phosphoribosyltransferase family. Short subfamily. Heteromultimer composed of HisG and HisZ subunits.

The protein localises to the cytoplasm. The enzyme catalyses 1-(5-phospho-beta-D-ribosyl)-ATP + diphosphate = 5-phospho-alpha-D-ribose 1-diphosphate + ATP. It functions in the pathway amino-acid biosynthesis; L-histidine biosynthesis; L-histidine from 5-phospho-alpha-D-ribose 1-diphosphate: step 1/9. Its function is as follows. Catalyzes the condensation of ATP and 5-phosphoribose 1-diphosphate to form N'-(5'-phosphoribosyl)-ATP (PR-ATP). Has a crucial role in the pathway because the rate of histidine biosynthesis seems to be controlled primarily by regulation of HisG enzymatic activity. The sequence is that of ATP phosphoribosyltransferase from Clostridioides difficile (strain 630) (Peptoclostridium difficile).